The primary structure comprises 287 residues: ATP synthase gamma chain (287 aa).

It belongs to the ATPase gamma chain family. As to quaternary structure, F-type ATPases have 2 components, CF(1) - the catalytic core - and CF(0) - the membrane proton channel. CF(1) has five subunits: alpha(3), beta(3), gamma(1), delta(1), epsilon(1). CF(0) has three main subunits: a, b and c.

The protein localises to the cell membrane. In terms of biological role, produces ATP from ADP in the presence of a proton gradient across the membrane. The gamma chain is believed to be important in regulating ATPase activity and the flow of protons through the CF(0) complex. The sequence is that of ATP synthase gamma chain from Wolbachia sp. subsp. Drosophila simulans (strain wRi).